We begin with the raw amino-acid sequence, 214 residues long: Adenylate kinase (214 aa).

Residue 10-15 participates in ATP binding; it reads GAGKGT. The tract at residues 30-59 is NMP; that stretch reads STGDMLRAAVKAGSELGLKAKEIMDAGKLV. AMP is bound by residues threonine 31, arginine 36, 57–59, 85–88, and glutamine 92; these read KLV and GFPR. Residues 122–159 form an LID region; sequence GRRVHAASGRVYHVKFNPPKVEDKDDVTGEELTIRKDD. Residues arginine 123 and 132-133 contribute to the ATP site; that span reads VY. 2 residues coordinate AMP: arginine 156 and arginine 167. ATP is bound at residue arginine 200.

This sequence belongs to the adenylate kinase family. Monomer.

It localises to the cytoplasm. It carries out the reaction AMP + ATP = 2 ADP. It participates in purine metabolism; AMP biosynthesis via salvage pathway; AMP from ADP: step 1/1. Catalyzes the reversible transfer of the terminal phosphate group between ATP and AMP. Plays an important role in cellular energy homeostasis and in adenine nucleotide metabolism. The chain is Adenylate kinase from Yersinia pseudotuberculosis serotype O:1b (strain IP 31758).